The sequence spans 218 residues: uncharacterized protein (218 aa).

The signal sequence occupies residues 1-21 (MKKFVYKYSFGALLLLSGLSS). The N-palmitoyl cysteine moiety is linked to residue C22. C22 is lipidated: S-diacylglycerol cysteine.

It belongs to the chlamydial CPn_0875/CT_734/TC_0107 family.

The protein localises to the cell membrane. This is an uncharacterized protein from Chlamydia muridarum (strain MoPn / Nigg).